The following is a 196-amino-acid chain: MKSIEVKGTARTIAERSSEQARALKEIRKNGGVPCVLYGAGEVVHFTVTNEGLRNLVYTPHIYVVDLDIDGKKVNAILKDIQFHPVKDNILHVDFYQIDEAKPIVMEVPVQLEGLAEGVKAGGKLALQMRKIKVKALYNVIPEKLTVNVSHLGLGKTVKVGELSFEGLELISAKEAVVCAVKLTRAARGAAAAAGK.

It belongs to the bacterial ribosomal protein bL25 family. CTC subfamily. Part of the 50S ribosomal subunit; part of the 5S rRNA/L5/L18/L25 subcomplex. Contacts the 5S rRNA. Binds to the 5S rRNA independently of L5 and L18.

In terms of biological role, this is one of the proteins that binds to the 5S RNA in the ribosome where it forms part of the central protuberance. This chain is Large ribosomal subunit protein bL25, found in Bacteroides thetaiotaomicron (strain ATCC 29148 / DSM 2079 / JCM 5827 / CCUG 10774 / NCTC 10582 / VPI-5482 / E50).